The following is a 452-amino-acid chain: MSLNSASTREHPSEAWKSLAQYLPSRSTDLDYWWQRIGPSAALVLEKAGYSIKSQYDALLFLYHWVVPELGPSLLSTDHKWKSLLQGDGSAFELSWKWNTNDSPPEVRYVVEPINQFSGTLLDPLNSQPSMVFRHRLASILPNIDLTWCHHFAGSLFDHNKARLLREMMPEGHKMPAGYTVPSTLVALEFLQDGQVATKSYFIPRKHGQGVWLPIAQFEESIAELDPVNEARAAVVDFVSKDPESLTPIMLAVDDKDVSSARIKWYFATARTELSWAKEIMTLGGRITTKHLPHLEQQLDDLIELIKAVTGIASEYPQDVELPFAPRFDPSKGAGNFVPLPIPIAGYQVHFNIAPGSEVPGVKLYIPMRRYARDDASVAKGITSFMESRGRNTYIKEYTEMLAGLLPDGKELSSVHCLQTYVSCLFKKNGELEITTYLGMAPYGDNHKPMSI.

The protein belongs to the tryptophan dimethylallyltransferase family.

It participates in mycotoxin biosynthesis. Functionally, prenyltransferase; part of the gene cluster that mediates the biosynthesis of fusaridione A, a bright yellow trans-fused decalin-containing tetramic acid with antimicrobial activity. The PKS module of fsdS catalyzes the formation of the polyketide unit which is then conjugated to L-tyrosine by the condensation domain of the fsdS NRPS module. Activity of the Dieckmann cyclase domain (RED) results in release of the intermediate fusaridione A. The unstable pyrrolidinedione ring of fusaridione A is opened through a reverse-Dieckmann reaction to afford its ring-opened form. The chain is Prenyltransferase fsdK from Fusarium heterosporum.